Here is a 466-residue protein sequence, read N- to C-terminus: MIKVYNTLNKKKEEFIPLTPGEVKMYVCGPTVYNFFHIGNGRTFIVFDTIRRYFEYRGFKVDFVQNFTDIDDKMIKKANEEGITVKKIGDTYIKEYYQDADALNIERATVNPRATEFIGEIIKFVKGLVDKGYAYEVDGDVYFSTKKFEGYGKLSGQNIEDLQSGARISVDERKKDPMDFAIWKAQKPGEPAWNSPWGMGRPGWHIECSCMAKKLLGETIDIHAGGSDLKFPHHENEIAQSEALTGEPFARYWLHSAFVNVNNEKMSKSLNNFFTAREILERYDADVIRFLMLSAHYRQQLNFSEDLLESAKASVERIYNAIGNLENLIDEVSREEMNEEEKAYLESLNKYKEKYIEKMDDDFNTADAITAIFDLIKDTNTNITIDSSKELAQKALELIRELGAPLGMFQKSTKGNLEEEIEALIAKRQQARKDRDFALADKIRDELKDRGIVLEDTPQGVRWKRI.

C28 contributes to the Zn(2+) binding site. Residues 30 to 40 carry the 'HIGH' region motif; it reads PTVYNFFHIGN. Residues C208, H233, and E237 each coordinate Zn(2+). Residues 265–269 carry the 'KMSKS' region motif; sequence KMSKS. K268 contributes to the ATP binding site.

The protein belongs to the class-I aminoacyl-tRNA synthetase family. Monomer. Zn(2+) is required as a cofactor.

The protein localises to the cytoplasm. The catalysed reaction is tRNA(Cys) + L-cysteine + ATP = L-cysteinyl-tRNA(Cys) + AMP + diphosphate. The chain is Cysteine--tRNA ligase from Clostridium perfringens (strain SM101 / Type A).